The sequence spans 394 residues: Elongation factor Tu (394 aa).

Positions 10 to 205 constitute a tr-type G domain; that stretch reads KPHVNIGTIG…VDTWIPLPPR (196 aa). Positions 19 to 26 are G1; sequence GHVDHGKT. 19-26 lines the GTP pocket; sequence GHVDHGKT. Mg(2+) is bound at residue threonine 26. The G2 stretch occupies residues 60–64; the sequence is GITIN. The interval 81–84 is G3; that stretch reads DCPG. GTP contacts are provided by residues 81-85 and 136-139; these read DCPGH and NKCD. The G4 stretch occupies residues 136-139; it reads NKCD. Positions 174–176 are G5; it reads SAL.

Belongs to the TRAFAC class translation factor GTPase superfamily. Classic translation factor GTPase family. EF-Tu/EF-1A subfamily. Monomer.

It is found in the cytoplasm. The enzyme catalyses GTP + H2O = GDP + phosphate + H(+). Functionally, GTP hydrolase that promotes the GTP-dependent binding of aminoacyl-tRNA to the A-site of ribosomes during protein biosynthesis. This is Elongation factor Tu from Phocaeicola vulgatus (strain ATCC 8482 / DSM 1447 / JCM 5826 / CCUG 4940 / NBRC 14291 / NCTC 11154) (Bacteroides vulgatus).